A 453-amino-acid polypeptide reads, in one-letter code: uncharacterized protein (453 aa).

The Cytoplasmic segment spans residues 1 to 110 (MIQTQSTAIK…KAILRTFNHP (110 aa)). A helical membrane pass occupies residues 111–131 (IALTELQFLVSAVLCVGFASI). Over 132-172 (VNLFRLPRLKHTKFSKALNSFPDGILPEYLDGNFRSSILHK) the chain is Lumenal. A helical membrane pass occupies residues 173–193 (FLVPSKLVLMTTFPMGIFQFI). Topologically, residues 194 to 201 (GHITSHKA) are cytoplasmic. The chain crosses the membrane as a helical span at residues 202 to 222 (VSMIPVSLVHSVKALSPIITV). Over 223–234 (GYYKFFEHRYYN) the chain is Lumenal. Residues 235–255 (SMTYYTLLLLIFGVMTTCWST) traverse the membrane as a helical segment. At 256–269 (HGSKRASDNKSGSS) the chain is on the cytoplasmic side. The chain crosses the membrane as a helical span at residues 270–290 (LIGLLFAFISMIIFVAQNIFA). The Lumenal portion of the chain corresponds to 291-332 (KNILTIRRKVGILPSSSTDDVTSKEGQPSLDKTRFSPLQVDK). The helical transmembrane segment at 333–353 (ITILFYCSCIGFSLTLLPFLT) threads the bilayer. Over 354–371 (GELMHGGSVINDLTLETV) the chain is Cytoplasmic. A helical membrane pass occupies residues 372-392 (ALVAIHGIAHFFQAMLAFQLI). Residues 393 to 413 (GLLSSINYSVANIMKRIVVIS) are Lumenal-facing. Residues 414-434 (VALFWETKLNFFQVFGVILTI) form a helical membrane-spanning segment. The Cytoplasmic portion of the chain corresponds to 435 to 453 (AGLYGYDKWGLSKKDGRQA).

This sequence belongs to the TPT transporter family.

The protein resides in the membrane. In terms of biological role, able to suppress the functional loss of YPT1. May form a channel. Protein SLY41 is not essential for cell viability. The SLY41 gene is a multicopy suppressor. This is an uncharacterized protein from Saccharomyces cerevisiae (strain ATCC 204508 / S288c) (Baker's yeast).